Consider the following 305-residue polypeptide: Achromobactin-binding periplasmic protein (305 aa).

The first 29 residues, 1 to 29 (MNEYLVSRRRLLRLSLSLLPLGLGRPALA), serve as a signal peptide directing secretion. A Fe/B12 periplasmic-binding domain is found at 37–302 (RVITLFQGAT…DIARVTGIAG (266 aa)).

It belongs to the bacterial solute-binding protein 8 family.

It localises to the periplasm. Binds citrate- or chloride-dependent Fe(3+); part of the binding-protein-dependent transport system CbrABCD for uptake of the siderophore achromobactin. This chain is Achromobactin-binding periplasmic protein (cbrA), found in Dickeya dadantii (strain 3937) (Erwinia chrysanthemi (strain 3937)).